Reading from the N-terminus, the 880-residue chain is DNA-directed RNA polymerase subunit Rpo1N (880 aa).

C58, C61, C68, H71, C98, C101, C146, and C149 together coordinate Zn(2+). 3 residues coordinate Mg(2+): D456, D458, and D460. Zn(2+)-binding residues include R573, C575, C580, H582, and S584.

The protein belongs to the RNA polymerase beta' chain family. As to quaternary structure, part of the 13-subunit RNA polymerase complex. Interacts with TFS4. In terms of assembly, (Microbial infection) Binds viral protein RIP, which blocks global transcription. It depends on Mg(2+) as a cofactor. The cofactor is Zn(2+).

The protein localises to the cytoplasm. The catalysed reaction is RNA(n) + a ribonucleoside 5'-triphosphate = RNA(n+1) + diphosphate. With respect to regulation, (Microbial infection) Binds to viral protein RIP (AC Q3V4R7), which inhibits global transcription. DNA-dependent RNA polymerase (RNAP) catalyzes the transcription of DNA into RNA using the four ribonucleoside triphosphates as substrates. Forms the clamp head domain. The polypeptide is DNA-directed RNA polymerase subunit Rpo1N (Sulfolobus acidocaldarius (strain ATCC 33909 / DSM 639 / JCM 8929 / NBRC 15157 / NCIMB 11770)).